We begin with the raw amino-acid sequence, 448 residues long: MRLLKSHPLLKLVNSYLIDASQPSNISYLWNFGSLLACCLIIQIVTGVTLAMHYSPNVLEAFNSIEHIMRDVNNGWLVRYLHSNTASAFFFLVYLHIGRGMYYGSYRAPRTLVWAIGTVILILMMATAFLGYQHSPKWFDISNKGSISNKGNITNSLPPLLQRWGGRINKRLFNKNLVKRGYCTSSSLNSPEMSERLQTIINELGINPVYVYEDLNQPSSWKQILHDTRDLSGVYMIINKTTKDYYIGSASNNRFYTRFCNHVIHFTGSKIVKLAIKKYELKNFAFVILDLYPNVVTKENNKELLDLEDKYLKLLVPNYNILTEAGSSFGYKHTEIDRQKMKDLYSDARREKIGSLNRGKKFSPETIEKIREKALTRPPMSEETKIKCIANTRPVVLYNLNRTIYGKYSTILEAANAINCNEKTIRRALQTEKKLVKRQWIVEDFSDK.

The cob exon 1 encoded stretch occupies residues 1 to 132; the sequence is MRLLKSHPLL…LMMATAFLGY (132 aa). Transmembrane regions (helical) follow at residues 32–52, 86–106, and 112–132; these read FGSLLACCLIIQIVTGVTLAM, ASAFFFLVYLHIGRGMYYGSY, and LVWAIGTVILILMMATAFLGY. Residues 133–448 are cob intron 1 encoded; it reads QHSPKWFDIS…QWIVEDFSDK (316 aa). The GIY-YIG domain maps to 230–321; the sequence is DLSGVYMIIN…LKLLVPNYNI (92 aa).

The protein to endonucleases of group I introns of fungi and phage. In terms of processing, the mature protein may arise from proteolytic cleavage of an in-frame translation of cob exon 1 plus intron 1, containing the bI1 open reading frame.

Its subcellular location is the mitochondrion inner membrane. In terms of biological role, mitochondrial DNA endonuclease involved in intron homing. This is Probable intron-encoded endonuclease bI1 (bI1) from Neurospora crassa (strain ATCC 24698 / 74-OR23-1A / CBS 708.71 / DSM 1257 / FGSC 987).